The following is a 219-amino-acid chain: Cytidylate kinase (219 aa).

Residue 15–23 (GPAASGKGT) participates in ATP binding.

This sequence belongs to the cytidylate kinase family. Type 1 subfamily.

The protein resides in the cytoplasm. It catalyses the reaction CMP + ATP = CDP + ADP. It carries out the reaction dCMP + ATP = dCDP + ADP. In Brucella melitensis biotype 1 (strain ATCC 23456 / CCUG 17765 / NCTC 10094 / 16M), this protein is Cytidylate kinase.